Consider the following 135-residue polypeptide: Large ribosomal subunit protein uL18c (135 aa).

It belongs to the universal ribosomal protein uL18 family. Part of the 50S ribosomal subunit; contacts the 5S rRNA.

It localises to the plastid. The protein localises to the chloroplast. Binds 5S rRNA, forms part of the central protuberance of the 50S subunit. The chain is Large ribosomal subunit protein uL18c (rpl18) from Phaeodactylum tricornutum (strain CCAP 1055/1).